A 33-amino-acid polypeptide reads, in one-letter code: Photosystem II reaction center protein Psb30 (33 aa).

The chain crosses the membrane as a helical span at residues 5-25; sequence VIAQPIVLGLIVASGPLVIVS.

The protein belongs to the Psb30/Ycf12 family. PSII is composed of 1 copy each of membrane proteins PsbA, PsbB, PsbC, PsbD, PsbE, PsbF, PsbH, PsbI, PsbJ, PsbK, PsbL, PsbM, PsbT, PsbX, PsbY, PsbZ, Psb30/Ycf12, peripheral proteins of the oxygen-evolving complex and a large number of cofactors. It forms dimeric complexes.

Its subcellular location is the plastid membrane. Functionally, a core subunit of photosystem II (PSII), probably helps stabilize the reaction center. The chain is Photosystem II reaction center protein Psb30 from Aneura mirabilis (Parasitic liverwort).